Here is a 20-residue protein sequence, read N- to C-terminus: Chemoheterotroph-specific protein (20 aa).

In Thiomonas delicata (Thiomonas cuprina), this protein is Chemoheterotroph-specific protein.